Reading from the N-terminus, the 355-residue chain is Probable nitronate monooxygenase (355 aa).

Residues Asn-71, Gln-175, Gly-180, Gly-218, and 237–240 each bind FMN; that span reads QMGT.

The protein belongs to the nitronate monooxygenase family. NMO class I subfamily. The cofactor is FMN.

It catalyses the reaction 3 propionate 3-nitronate + 3 O2 + H2O = 3 3-oxopropanoate + 2 nitrate + nitrite + H2O2 + 3 H(+). Functionally, nitronate monooxygenase that uses molecular oxygen to catalyze the oxidative denitrification of alkyl nitronates. Acts on propionate 3-nitronate (P3N), the presumed physiological substrate. Probably functions in the detoxification of P3N, a metabolic poison produced by plants and fungi as a defense mechanism. The polypeptide is Probable nitronate monooxygenase (Staphylococcus aureus (strain JH1)).